The chain runs to 563 residues: Coiled-coil domain-containing protein 38 (563 aa).

Positions 1 to 11 are enriched in polar residues; it reads MSSNLLPTLNS. Positions 1-21 are disordered; that stretch reads MSSNLLPTLNSGGKVKDGSTK. The stretch at 129-212 forms a coiled coil; the sequence is KRNTIKKFEK…VKSEIAKTEF (84 aa). The disordered stretch occupies residues 272–311; it reads ESGRTAVLSEDASQGRDSQGKPSRSLTRTPEKKKSNLAES. A compositionally biased stretch (polar residues) spans 282–299; sequence DASQGRDSQGKPSRSLTR. Coiled-coil stretches lie at residues 384-415 and 497-522; these read NIEF…KSKL and RDEK…AVAQ. The tract at residues 522 to 563 is disordered; sequence QPKKKLGRRLVFHSKPPSGNKQQLPLVNETKTKSQEEEYFFT. The segment covering 523 to 533 has biased composition (basic residues); the sequence is PKKKLGRRLVF.

As to quaternary structure, interacts with CCDC42, CFAP53, IFT88 and ODF2. Interacts with CCDC146. Interacts with TEKT3. Interacts with ubiquitinated histone H2A.

It is found in the cytoplasm. The protein resides in the cytoskeleton. It localises to the microtubule organizing center. The protein localises to the centrosome. Its subcellular location is the perinuclear region. It is found in the cell projection. The protein resides in the cilium. It localises to the flagellum. Its function is as follows. Essential for male fertility. Required for sperm flagellum biogenesis. Also required for acrosome biogenesis. Required for the attachment of developing acrosomes to the nucleus during spermiogenesis and may be involved in the transport of fibrous sheath components. This chain is Coiled-coil domain-containing protein 38 (CCDC38), found in Homo sapiens (Human).